An 86-amino-acid chain; its full sequence is uncharacterized protein (86 aa).

The protein to B.subtilis spore coat protein C.

This is an uncharacterized protein from Bacillus subtilis (strain 168).